Reading from the N-terminus, the 384-residue chain is Cytochrome b (384 aa).

The next 4 helical transmembrane spans lie at 32–52, 76–98, 113–133, and 179–199; these read LGSL…FLAM, WLIR…IHIG, VWTV…LGYC, and FFTF…MHLM. Residues histidine 82 and histidine 96 each contribute to the heme b site. The heme b site is built by histidine 183 and histidine 197. Histidine 202 contributes to the a ubiquinone binding site. A run of 4 helical transmembrane segments spans residues 225-245, 289-309, 321-341, and 348-368; these read FIFK…LFVF, LGGV…PITD, LSKF…KLGE, and FILM…ILVP.

This sequence belongs to the cytochrome b family. Fungal cytochrome b-c1 complex contains 10 subunits; 3 respiratory subunits, 2 core proteins and 5 low-molecular weight proteins. Cytochrome b-c1 complex is a homodimer. Heme b serves as cofactor.

It localises to the mitochondrion inner membrane. Functionally, component of the ubiquinol-cytochrome c reductase complex (complex III or cytochrome b-c1 complex) that is part of the mitochondrial respiratory chain. The b-c1 complex mediates electron transfer from ubiquinol to cytochrome c. Contributes to the generation of a proton gradient across the mitochondrial membrane that is then used for ATP synthesis. In Eremothecium gossypii (strain ATCC 10895 / CBS 109.51 / FGSC 9923 / NRRL Y-1056) (Yeast), this protein is Cytochrome b (COB).